The primary structure comprises 190 residues: UPF0200 protein TSIB_0920 (190 aa).

7-14 (GMPGSGKG) lines the ATP pocket.

Belongs to the UPF0200 family.

This Thermococcus sibiricus (strain DSM 12597 / MM 739) protein is UPF0200 protein TSIB_0920.